Consider the following 195-residue polypeptide: PE-PGRS family protein PE_PGRS61 (195 aa).

It belongs to the mycobacterial PE family. PGRS subfamily. As to quaternary structure, interacts with human TLR2.

It localises to the secreted. Its subcellular location is the cell wall. It is found in the cell surface. With respect to regulation, binding of Ca(2+) to PE_PGRS61 induces conformational changes and increases affinity for TLR2. Functionally, mediates Ca(2+)-dependent up-regulation of the anti-inflammatory cytokine IL-10. This chain is PE-PGRS family protein PE_PGRS61, found in Mycobacterium tuberculosis (strain ATCC 25618 / H37Rv).